The sequence spans 54 residues: Large ribosomal subunit protein bL33A (54 aa).

It belongs to the bacterial ribosomal protein bL33 family.

In Saccharopolyspora erythraea (strain ATCC 11635 / DSM 40517 / JCM 4748 / NBRC 13426 / NCIMB 8594 / NRRL 2338), this protein is Large ribosomal subunit protein bL33A.